Consider the following 174-residue polypeptide: Phytochrome-interacting ankyrin-repeat protein 2 (174 aa).

Positions 1–13 (MLQEPSAAFSLRR) are enriched in low complexity. A disordered region spans residues 1–29 (MLQEPSAAFSLRRNSFRRRSPRSNVDDRG). Position 15 is a phosphoserine (S15). ANK repeat units follow at residues 28–57 (RGWN…DVNA), 65–94 (KGVS…NIDA), and 100–129 (CGWT…FLAD).

As to quaternary structure, interacts with phytochrome A (PHYA), both in Pr and Pfr forms. Binds to PIF3, a repressor of photomorphogenesis in response to phytochrome-mediated light signaling; this interaction may trigger the repression of PHYA-mediated PIF3 phosphorylation. Interacts with SIGE/SIG5 in mitochondrion. Interacts with RPS9M (via C terminus). In terms of processing, phosphorylated by PHYA. Mostly expressed in flowers, cotyledons, leaves and siliques, and, to a lower extent, in roots and stems. Also detected at low levels in seedlings grown in continuous dark or light conditions. Expressed in male and female gametophytes.

Its subcellular location is the cytoplasm. The protein resides in the nucleus. It is found in the mitochondrion. In terms of biological role, promotes anthocyanin accumulation through interaction with PHYA, especially in response to far-red light, high light and sucrose treatment, probably by triggering A3G2XYLT/UF3GT expression. Required for gametophytes development as well as male-female gamete recognition during fertilization, possibly by regulating mitochondrial gene expression. Represses PHYA-mediated PIF3 phosphorylation. In Arabidopsis thaliana (Mouse-ear cress), this protein is Phytochrome-interacting ankyrin-repeat protein 2.